Reading from the N-terminus, the 130-residue chain is Probable 15 kDa heat shock protein (130 aa).

The region spanning 21–130 (ERVRILAPRV…LTKKIEVRSE (110 aa)) is the sHSP domain.

The protein belongs to the small heat shock protein (HSP20) family.

This chain is Probable 15 kDa heat shock protein (hsp15), found in Leptospira interrogans serogroup Icterohaemorrhagiae serovar Lai (strain 56601).